The chain runs to 519 residues: Aldehyde dehydrogenase, mitochondrial (519 aa).

A mitochondrion-targeting transit peptide spans 1–19 (MLRAALSTARRGPRLSRLL). Residues 12 to 26 (GPRLSRLLSAAATSA) carry the SIFI-degron motif. Lysine 54, lysine 75, lysine 80, and lysine 161 each carry N6-acetyllysine. An NAD(+)-binding site is contributed by 264 to 269 (GSTEVG). The active-site Proton acceptor is glutamate 287. Cysteine 321 functions as the Nucleophile in the catalytic mechanism. N6-acetyllysine is present on residues lysine 370, lysine 377, lysine 385, lysine 409, lysine 428, lysine 430, lysine 443, and lysine 453.

Belongs to the aldehyde dehydrogenase family. As to quaternary structure, homotetramer. Post-translationally, in response to mitochondrial stress, the precursor protein is ubiquitinated by the SIFI complex in the cytoplasm before mitochondrial import, leading to its degradation. Within the SIFI complex, UBR4 initiates ubiquitin chain that are further elongated or branched by KCMF1.

Its subcellular location is the mitochondrion matrix. It catalyses the reaction an aldehyde + NAD(+) + H2O = a carboxylate + NADH + 2 H(+). Its pathway is alcohol metabolism; ethanol degradation; acetate from ethanol: step 2/2. Functionally, required for clearance of cellular formaldehyde, a cytotoxic and carcinogenic metabolite that induces DNA damage. In Rattus norvegicus (Rat), this protein is Aldehyde dehydrogenase, mitochondrial (Aldh2).